Consider the following 185-residue polypeptide: Protein GrpE (185 aa).

The protein belongs to the GrpE family. Homodimer.

It localises to the cytoplasm. Its function is as follows. Participates actively in the response to hyperosmotic and heat shock by preventing the aggregation of stress-denatured proteins, in association with DnaK and GrpE. It is the nucleotide exchange factor for DnaK and may function as a thermosensor. Unfolded proteins bind initially to DnaJ; upon interaction with the DnaJ-bound protein, DnaK hydrolyzes its bound ATP, resulting in the formation of a stable complex. GrpE releases ADP from DnaK; ATP binding to DnaK triggers the release of the substrate protein, thus completing the reaction cycle. Several rounds of ATP-dependent interactions between DnaJ, DnaK and GrpE are required for fully efficient folding. The sequence is that of Protein GrpE from Methanobrevibacter smithii (strain ATCC 35061 / DSM 861 / OCM 144 / PS).